A 521-amino-acid polypeptide reads, in one-letter code: Probable rhamnogalacturonase B (521 aa).

The signal sequence occupies residues 1–21; that stretch reads MRLHAFTLLSLLGLVPSFAAA. A disulfide bond links C42 and C68. N145 carries an N-linked (GlcNAc...) asparagine glycan. D219 serves as the catalytic Proton donor. C221 and C238 are disulfide-bonded. N-linked (GlcNAc...) asparagine glycosylation is present at N239. Residue H294 is part of the active site. N-linked (GlcNAc...) asparagine glycosylation is present at N321. 2 disulfides stabilise this stretch: C344–C350 and C372–C381. The disordered stretch occupies residues 462–521; the sequence is ETPAAASRSEQVVQGAPQETGQSAPESAGPVPSGNPGPVPTGGSRPSRHRHGHHHFGSAI. The segment covering 469–486 has biased composition (polar residues); the sequence is RSEQVVQGAPQETGQSAP. The span at 507 to 521 shows a compositional bias: basic residues; the sequence is PSRHRHGHHHFGSAI.

This sequence belongs to the glycosyl hydrolase 28 family.

The protein localises to the secreted. The enzyme catalyses Endohydrolysis of alpha-D-GalA-(1-&gt;2)-alpha-L-Rha glycosidic bond in the rhamnogalacturonan I backbone with initial inversion of anomeric configuration releasing oligosaccharides with beta-D-GalA at the reducing end.. Functionally, pectinolytic enzymes consist of four classes of enzymes: pectine lyase, polygalacturonase, pectin methylesterase and rhamnogalacturonase. Hydrolyzes alpha-D-galacturonopyranosyl-(1,2)-alpha-L-rhamnopyranosyl linkages in the backbone of the hairy regions of pectins. This is Probable rhamnogalacturonase B (rhgB) from Aspergillus fumigatus (strain CBS 144.89 / FGSC A1163 / CEA10) (Neosartorya fumigata).